A 266-amino-acid polypeptide reads, in one-letter code: Undecaprenyl-diphosphatase (266 aa).

8 helical membrane passes run 1-21 (MDTFQVIILALIQGLTEFLPI), 39-59 (QGLAFDVAVHIGSLLAVVLYF), 83-103 (SKLAWWIILATLPAVILGFAL), 111-131 (LRGPGVIAITTVLFGLLLWWA), 144-164 (TGWKKALLIGFAQALALIPGT), 183-203 (AAARFSFLMSIPVILGAAILM), 218-238 (SLALGVGVSFVAAYTCIHLFL), and 246-266 (MTPFVIYRLALGALLCAFIFM).

Belongs to the UppP family.

It localises to the cell inner membrane. The catalysed reaction is di-trans,octa-cis-undecaprenyl diphosphate + H2O = di-trans,octa-cis-undecaprenyl phosphate + phosphate + H(+). In terms of biological role, catalyzes the dephosphorylation of undecaprenyl diphosphate (UPP). Confers resistance to bacitracin. The polypeptide is Undecaprenyl-diphosphatase (Shewanella woodyi (strain ATCC 51908 / MS32)).